Consider the following 113-residue polypeptide: MDFIRMIEEEQMKKDLPAFRPGDTVRVHVKVVEGTRERIQAFEGVVIKMKGGGLRRTFTVRRVTYGVGVERTFPLHSPRIDRIEVIRRGIVRRAKLYYLRELSGKAARIRDRR.

This sequence belongs to the bacterial ribosomal protein bL19 family.

Its function is as follows. This protein is located at the 30S-50S ribosomal subunit interface and may play a role in the structure and function of the aminoacyl-tRNA binding site. This is Large ribosomal subunit protein bL19 from Desulfitobacterium hafniense (strain DSM 10664 / DCB-2).